Consider the following 259-residue polypeptide: Phosphatidylglycerol--prolipoprotein diacylglyceryl transferase (259 aa).

The next 4 helical transmembrane spans lie at 9 to 29, 55 to 75, 92 to 112, and 117 to 137; these read IIFSIGPLAISWYSLSYVIGI, FITYAVIGIIVGGRLGFVLLY, EGGMSFHGGALGGIIAAYLFC, and INFLSLTDIIAPVVPIGLFLG. Residue Arg-138 coordinates a 1,2-diacyl-sn-glycero-3-phospho-(1'-sn-glycerol). Helical transmembrane passes span 172 to 192, 201 to 221, and 228 to 248; these read QLYEAFFEGLVLFSILAYTTF, GLNSGIFFTFYGLFRITIEIF, and IGFILDSLTMGQILSVPMLLL.

The protein belongs to the Lgt family.

Its subcellular location is the cell inner membrane. The catalysed reaction is L-cysteinyl-[prolipoprotein] + a 1,2-diacyl-sn-glycero-3-phospho-(1'-sn-glycerol) = an S-1,2-diacyl-sn-glyceryl-L-cysteinyl-[prolipoprotein] + sn-glycerol 1-phosphate + H(+). Its pathway is protein modification; lipoprotein biosynthesis (diacylglyceryl transfer). Catalyzes the transfer of the diacylglyceryl group from phosphatidylglycerol to the sulfhydryl group of the N-terminal cysteine of a prolipoprotein, the first step in the formation of mature lipoproteins. This Rickettsia conorii (strain ATCC VR-613 / Malish 7) protein is Phosphatidylglycerol--prolipoprotein diacylglyceryl transferase.